Consider the following 202-residue polypeptide: Protein FAR-RED ELONGATED HYPOCOTYL 1 (202 aa).

Ser-39 bears the Phosphoserine mark. Positions 40–43 match the Nuclear localization sequence (NLS) motif; that stretch reads KKRK. The short motif at 54–57 is the Nuclear export sequence (NES) element; it reads LLPL. Thr-61 carries the phosphothreonine modification.

The protein belongs to the FHY1 protein family. As to quaternary structure, homodimer and heterodimer with FHL. Interacts with underphosphorylated PHYA, especially upon far-red (FR) light illumination. Binds to LAF1 and HFR1. Forms PHYA/FHY1/HFR1 complex in darkness but dissociates from PHYA and HFR1 in response to continuous FR light (FRc). Post-translationally, inactivated by rapid reversible PHYA-mediated phosphorylation at Ser-39 and Thr-61 in red light (R), thus inhibiting PHYA signaling in a negative feedback loop; this ensures the seedling deetiolation process in response to a R-enriched light condition. Subsequent exposure to far-red light (FR) after the R conditions leads to dephosphorylation. The phosphorylated form is cytoplasmic only and unable to bind to chromatin at direct target genes whereas the unphosphorylated form can shuttle from cytoplasm to nucleus. Expressed in hypocotyl cells of etiolated plants.

It is found in the nucleus. Its subcellular location is the cytoplasm. In terms of biological role, key regulator of far red / red (FR/R) spectrum-specific responses essential for the adaption to changing light conditions (e.g. de-etiolation), essentially by regulating PHYA shuttling from the cytoplasm to the nucleus and by directly regulating the expression of some target genes, depending on light conditions and phosphorylation status. Binds chromatin at target genes promoters, especially in FR light conditions. Can activate transcription of different genes, some being in a phytochrome A (PHYA)-dependent and other in a PHYA-independent manners. Controls specific aspects of plant development, such as the inhibition of seed germination under FR during salt stress. Essential for light-regulated PHYA nuclear accumulation and subsequent PHYA phototropic signaling processes involved in photomorphogenesis. Mediates the association of PHYA with HFR1 and LAF1 in the nucleus in response to FR conditions. PHYA-specific signal transducer in response to continuous FR lights. Contributes to inhibition of hypocotyl elongation in continuous blue light (B). This Arabidopsis thaliana (Mouse-ear cress) protein is Protein FAR-RED ELONGATED HYPOCOTYL 1.